The following is a 351-amino-acid chain: Protein Wnt-8a (351 aa).

The first 24 residues, 1–24 (MGNLFMLWAALGICCAAFSASAWS), serve as a signal peptide directing secretion. Cys-54 and Cys-65 are disulfide-bonded. An N-linked (GlcNAc...) asparagine glycan is attached at Asn-103. 10 disulfide bridges follow: Cys-104–Cys-112, Cys-114–Cys-132, Cys-180–Cys-194, Cys-182–Cys-189, Cys-259–Cys-297, Cys-275–Cys-290, Cys-294–Cys-336, Cys-312–Cys-327, Cys-314–Cys-324, and Cys-319–Cys-320. Ser-186 carries the O-palmitoleoyl serine lipid modification. Residues Asn-262 and Asn-281 are each glycosylated (N-linked (GlcNAc...) asparagine).

This sequence belongs to the Wnt family. Forms a soluble 1:1 complex with AFM; this prevents oligomerization and is required for prolonged biological activity. The complex with AFM may represent the physiological form in body fluids. Palmitoleoylation is required for efficient binding to frizzled receptors. Depalmitoleoylation leads to Wnt signaling pathway inhibition. In terms of processing, proteolytic processing by TIKI1 and TIKI2 promotes oxidation and formation of large disulfide-bond oligomers, leading to inactivation of WNT8A.

It is found in the secreted. The protein localises to the extracellular space. It localises to the extracellular matrix. In terms of biological role, ligand for members of the frizzled family of seven transmembrane receptors. Plays a role in embryonic patterning. This chain is Protein Wnt-8a (WNT8A), found in Homo sapiens (Human).